Consider the following 271-residue polypeptide: ATP synthase subunit delta (271 aa).

The protein belongs to the ATPase delta chain family. In terms of assembly, F-type ATPases have 2 components, F(1) - the catalytic core - and F(0) - the membrane proton channel. F(1) has five subunits: alpha(3), beta(3), gamma(1), delta(1), epsilon(1). F(0) has three main subunits: a(1), b(2) and c(10-14). The alpha and beta chains form an alternating ring which encloses part of the gamma chain. F(1) is attached to F(0) by a central stalk formed by the gamma and epsilon chains, while a peripheral stalk is formed by the delta and b chains.

The protein localises to the cell membrane. Functionally, f(1)F(0) ATP synthase produces ATP from ADP in the presence of a proton or sodium gradient. F-type ATPases consist of two structural domains, F(1) containing the extramembraneous catalytic core and F(0) containing the membrane proton channel, linked together by a central stalk and a peripheral stalk. During catalysis, ATP synthesis in the catalytic domain of F(1) is coupled via a rotary mechanism of the central stalk subunits to proton translocation. This protein is part of the stalk that links CF(0) to CF(1). It either transmits conformational changes from CF(0) to CF(1) or is implicated in proton conduction. In Renibacterium salmoninarum (strain ATCC 33209 / DSM 20767 / JCM 11484 / NBRC 15589 / NCIMB 2235), this protein is ATP synthase subunit delta.